Reading from the N-terminus, the 319-residue chain is ATP-dependent 6-phosphofructokinase (319 aa).

Residue G11 participates in ATP binding. 21–25 is an ADP binding site; sequence RSIAR. ATP contacts are provided by residues 72–73 and 102–105; these read RC and GDGS. D103 lines the Mg(2+) pocket. 125 to 127 serves as a coordination point for substrate; the sequence is TID. The Proton acceptor role is filled by D127. Residue R154 coordinates ADP. Substrate contacts are provided by residues R162 and 169–171; that span reads MGR. Residues 185–187, R211, and 213–215 each bind ADP; these read GAE and KLH. Residues E222, K243, and 249-252 each bind substrate; that span reads HVQR.

The protein belongs to the phosphofructokinase type A (PFKA) family. ATP-dependent PFK group I subfamily. Prokaryotic clade 'B1' sub-subfamily. As to quaternary structure, homotetramer. The cofactor is Mg(2+).

Its subcellular location is the cytoplasm. The enzyme catalyses beta-D-fructose 6-phosphate + ATP = beta-D-fructose 1,6-bisphosphate + ADP + H(+). It functions in the pathway carbohydrate degradation; glycolysis; D-glyceraldehyde 3-phosphate and glycerone phosphate from D-glucose: step 3/4. Its activity is regulated as follows. Allosterically activated by ADP and other diphosphonucleosides, and allosterically inhibited by phosphoenolpyruvate. Its function is as follows. Catalyzes the phosphorylation of D-fructose 6-phosphate to fructose 1,6-bisphosphate by ATP, the first committing step of glycolysis. This Finegoldia magna (strain ATCC 29328 / DSM 20472 / WAL 2508) (Peptostreptococcus magnus) protein is ATP-dependent 6-phosphofructokinase.